Reading from the N-terminus, the 264-residue chain is NADH dehydrogenase [ubiquinone] iron-sulfur protein 3, mitochondrial (264 aa).

The N-terminal 36 residues, Met1–Arg36, are a transit peptide targeting the mitochondrion.

This sequence belongs to the complex I 30 kDa subunit family. Core subunit of respiratory chain NADH dehydrogenase (Complex I) which is composed of 45 different subunits. Interacts with NDUFAF3. Interacts with RAB5IF. Found in subcomplexes containing subunits NDUFS2, MT-ND1 and NDUFA13.

It is found in the mitochondrion inner membrane. It catalyses the reaction a ubiquinone + NADH + 5 H(+)(in) = a ubiquinol + NAD(+) + 4 H(+)(out). Its function is as follows. Core subunit of the mitochondrial membrane respiratory chain NADH dehydrogenase (Complex I) which catalyzes electron transfer from NADH through the respiratory chain, using ubiquinone as an electron acceptor. Essential for the catalytic activity and assembly of complex I. The sequence is that of NADH dehydrogenase [ubiquinone] iron-sulfur protein 3, mitochondrial (NDUFS3) from Pan troglodytes (Chimpanzee).